We begin with the raw amino-acid sequence, 183 residues long: Shikimate kinase (183 aa).

19-24 (GAGKTT) contributes to the ATP binding site. Position 23 (T23) interacts with Mg(2+). Substrate-binding residues include D41, R65, and G87. R124 provides a ligand contact to ATP. Position 143 (R143) interacts with substrate.

The protein belongs to the shikimate kinase family. In terms of assembly, monomer. The cofactor is Mg(2+).

It is found in the cytoplasm. It catalyses the reaction shikimate + ATP = 3-phosphoshikimate + ADP + H(+). The protein operates within metabolic intermediate biosynthesis; chorismate biosynthesis; chorismate from D-erythrose 4-phosphate and phosphoenolpyruvate: step 5/7. In terms of biological role, catalyzes the specific phosphorylation of the 3-hydroxyl group of shikimic acid using ATP as a cosubstrate. This chain is Shikimate kinase, found in Thermosynechococcus vestitus (strain NIES-2133 / IAM M-273 / BP-1).